The primary structure comprises 525 residues: Arylsulfatase G (525 aa).

The N-terminal stretch at M1 to S16 is a signal peptide. Residues D44, D45, and C84 each coordinate Ca(2+). The Nucleophile role is filled by C84. Position 84 is a 3-oxoalanine (Cys) (C84). N117 is a glycosylation site (N-linked (GlcNAc...) asparagine). K137 is a binding site for substrate. H139 is an active-site residue. A substrate-binding site is contributed by S162. A glycan (N-linked (GlcNAc...) asparagine) is linked at N215. H251 contributes to the substrate binding site. 2 residues coordinate Ca(2+): D302 and N303. N356 and N497 each carry an N-linked (GlcNAc...) asparagine glycan.

The protein belongs to the sulfatase family. Ca(2+) serves as cofactor. N-glycosylated. N-glycosylated with both high mannose and complex type sugars. In terms of processing, the conversion to 3-oxoalanine (also known as C-formylglycine, FGly), of a serine or cysteine residue in prokaryotes and of a cysteine residue in eukaryotes, is critical for catalytic activity. Post-translationally, the 63-kDa precursor undergoes proteolytic processing in two steps, yielding two fragments in the first step (apparent molecular masses of 44 and 18 kDa). In the second step, the 44-kDa fragment is processed further to the 34- and 10-kDa chains. The 10-kDa chain is a cleavage product of the 44-kDa fragment but linked to the 18-kDa chain through a disulfide bridge. As to expression, widely expressed, with very low expression in brain, lung, heart and skeletal muscle.

The protein resides in the lysosome. The catalysed reaction is an aryl sulfate + H2O = a phenol + sulfate + H(+). It carries out the reaction Hydrolysis of the 3-sulfate groups of the N-sulfo-D-glucosamine 3-O-sulfate units of heparin.. Inhibited by phosphate. The phosphate forms a covalent bond with the active site 3-oxoalanine. Its function is as follows. Displays arylsulfatase activity at acidic pH towards artificial substrates, such as p-nitrocatechol sulfate and also, but with a lower activity towards p-nitrophenyl sulfate and 4-methylumbelliferyl sulfate. Catalyzes the hydrolysis of the 3-sulfate groups of the N-sulfo-D-glucosamine 3-O-sulfate units of heparin. This is Arylsulfatase G (ARSG) from Homo sapiens (Human).